A 480-amino-acid polypeptide reads, in one-letter code: Probable glycosyltransferase 2 (480 aa).

Over residues 1 to 21 the composition is skewed to gly residues; the sequence is MGQEGMGYNNGKGGGGGGGGL. The segment at 1-45 is disordered; the sequence is MGQEGMGYNNGKGGGGGGGGLPMTAPRPRGASPLSSHGHHHRSRK. At 1–49 the chain is on the cytoplasmic side; it reads MGQEGMGYNNGKGGGGGGGGLPMTAPRPRGASPLSSHGHHHRSRKIHRT. The helical; Signal-anchor for type II membrane protein transmembrane segment at 50–72 threads the bilayer; sequence FNNVKITVLCGLVTILVLRGTIG. At 73 to 480 the chain is on the lumenal side; sequence LNLSLPNQPT…DVKAKISTTS (408 aa). N-linked (GlcNAc...) asparagine glycans are attached at residues asparagine 74, asparagine 124, asparagine 129, and asparagine 458.

Belongs to the glycosyltransferase 34 family.

Its subcellular location is the golgi apparatus membrane. In terms of biological role, probable glycosyltransferase that may be involved in the biosynthesis of xyloglucan. This Oryza sativa subsp. indica (Rice) protein is Probable glycosyltransferase 2.